A 63-amino-acid chain; its full sequence is Large ribosomal subunit protein bL35 (63 aa).

Belongs to the bacterial ribosomal protein bL35 family.

This chain is Large ribosomal subunit protein bL35, found in Finegoldia magna (strain ATCC 29328 / DSM 20472 / WAL 2508) (Peptostreptococcus magnus).